A 668-amino-acid chain; its full sequence is MTLYDENNLHIIKDNLRYLKLLSKQYPSISSASSEIINLQAILNLPKGTEHFISDVHGEYESFTHMLKNASGVIKRKIDDVFGTSLRECDKRNLATLIYYPEQKLDLIKKSEKNLEDWYKITLYRLIRLCQIVSSKYTRSKVRKALPSDFAYIIEELLNEQGDRVDKQEYYNSIIETIIDIDRASEFIIAISNVIQRLVVDKLHIIGDIYDRGPGAEIIIEALSKHHSIDIQWGNHDIVWMGAAAGCEACIANVIRISLRYANLSTLEDGYGINLLPLATFAMDFYKEDNCENFKPRTIDKNLNKTDIKLLSKMHKAISIIQFKLEGKIIKRRPEFKMEERLLLDKINIKEGTLNLNEKIYKLIDTNFPTLDKENPYELNERERDLVEKLTNSFINSEKLQRHIKFLYSNGSLYLKYNSNLLYHGCIPLNEDGSLKEVTLCKETLKGKSLLDKLDRLAREAYFFKKDPESKLYGMDMMWYLWCGPNSPLFGKKKMTTFERYFLDDKDTHKEEKNPYYKYRNDEKMCTIIFEEFELDVDNSHIINGHIPVKTKEGENPIKANGKLLVIDGGFCKAYQPQTGIAGYTLIYNSYGLLLTSHEPFSSIHKAIVEGNDILSSTIILEHVSSRKRVLDTDSGEEIKKQIHDLEMLLVAYRKGLIKEENEANIRF.

The protein belongs to the FBPase class 3 family. Mn(2+) is required as a cofactor.

The enzyme catalyses beta-D-fructose 1,6-bisphosphate + H2O = beta-D-fructose 6-phosphate + phosphate. It participates in carbohydrate biosynthesis; gluconeogenesis. This chain is Fructose-1,6-bisphosphatase class 3, found in Clostridium botulinum (strain Loch Maree / Type A3).